The primary structure comprises 210 residues: Nucleoside triphosphate pyrophosphatase (210 aa).

Aspartate 80 (proton acceptor) is an active-site residue.

Belongs to the Maf family. It depends on a divalent metal cation as a cofactor.

Its subcellular location is the cytoplasm. The enzyme catalyses a ribonucleoside 5'-triphosphate + H2O = a ribonucleoside 5'-phosphate + diphosphate + H(+). The catalysed reaction is a 2'-deoxyribonucleoside 5'-triphosphate + H2O = a 2'-deoxyribonucleoside 5'-phosphate + diphosphate + H(+). Its function is as follows. Nucleoside triphosphate pyrophosphatase. May have a dual role in cell division arrest and in preventing the incorporation of modified nucleotides into cellular nucleic acids. The sequence is that of Nucleoside triphosphate pyrophosphatase from Mycobacterium sp. (strain JLS).